The following is a 369-amino-acid chain: DNA replication and repair protein RecF (369 aa).

30–37 (GINAQGKT) serves as a coordination point for ATP.

This sequence belongs to the RecF family.

It localises to the cytoplasm. In terms of biological role, the RecF protein is involved in DNA metabolism; it is required for DNA replication and normal SOS inducibility. RecF binds preferentially to single-stranded, linear DNA. It also seems to bind ATP. This chain is DNA replication and repair protein RecF, found in Macrococcus caseolyticus (strain JCSC5402) (Macrococcoides caseolyticum).